We begin with the raw amino-acid sequence, 501 residues long: Lysine--tRNA ligase (501 aa).

2 residues coordinate Mg(2+): E406 and E413.

It belongs to the class-II aminoacyl-tRNA synthetase family. In terms of assembly, homodimer. Mg(2+) serves as cofactor.

It localises to the cytoplasm. The catalysed reaction is tRNA(Lys) + L-lysine + ATP = L-lysyl-tRNA(Lys) + AMP + diphosphate. This Halalkalibacterium halodurans (strain ATCC BAA-125 / DSM 18197 / FERM 7344 / JCM 9153 / C-125) (Bacillus halodurans) protein is Lysine--tRNA ligase (lysS).